Consider the following 541-residue polypeptide: Glucose-6-phosphate isomerase (541 aa).

E346 functions as the Proton donor in the catalytic mechanism. Residues H377 and K506 contribute to the active site.

This sequence belongs to the GPI family.

Its subcellular location is the cytoplasm. The catalysed reaction is alpha-D-glucose 6-phosphate = beta-D-fructose 6-phosphate. It participates in carbohydrate biosynthesis; gluconeogenesis. It functions in the pathway carbohydrate degradation; glycolysis; D-glyceraldehyde 3-phosphate and glycerone phosphate from D-glucose: step 2/4. In terms of biological role, catalyzes the reversible isomerization of glucose-6-phosphate to fructose-6-phosphate. The sequence is that of Glucose-6-phosphate isomerase from Rhizobium rhizogenes (strain K84 / ATCC BAA-868) (Agrobacterium radiobacter).